Consider the following 689-residue polypeptide: tRNA 5-methylaminomethyl-2-thiouridine biosynthesis bifunctional protein MnmC (689 aa).

The segment at 1–245 (MNQRPIQTAT…KREMLTGTLP (245 aa)) is tRNA (mnm(5)s(2)U34)-methyltransferase. Positions 270-689 (IGGGIVSALT…RSPATQESSR (420 aa)) are FAD-dependent cmnm(5)s(2)U34 oxidoreductase.

In the N-terminal section; belongs to the methyltransferase superfamily. tRNA (mnm(5)s(2)U34)-methyltransferase family. The protein in the C-terminal section; belongs to the DAO family. It depends on FAD as a cofactor.

It localises to the cytoplasm. The catalysed reaction is 5-aminomethyl-2-thiouridine(34) in tRNA + S-adenosyl-L-methionine = 5-methylaminomethyl-2-thiouridine(34) in tRNA + S-adenosyl-L-homocysteine + H(+). In terms of biological role, catalyzes the last two steps in the biosynthesis of 5-methylaminomethyl-2-thiouridine (mnm(5)s(2)U) at the wobble position (U34) in tRNA. Catalyzes the FAD-dependent demodification of cmnm(5)s(2)U34 to nm(5)s(2)U34, followed by the transfer of a methyl group from S-adenosyl-L-methionine to nm(5)s(2)U34, to form mnm(5)s(2)U34. This Yersinia pseudotuberculosis serotype I (strain IP32953) protein is tRNA 5-methylaminomethyl-2-thiouridine biosynthesis bifunctional protein MnmC.